A 96-amino-acid chain; its full sequence is Large ribosomal subunit protein eL43 (96 aa).

Residues Cys-41, Cys-44, Cys-59, and Cys-62 each contribute to the Zn(2+) site. Residues Cys-41–Cys-62 form a C4-type zinc finger.

This sequence belongs to the eukaryotic ribosomal protein eL43 family. Putative zinc-binding subfamily. In terms of assembly, part of the 50S ribosomal subunit. Zn(2+) serves as cofactor.

In terms of biological role, binds to the 23S rRNA. The polypeptide is Large ribosomal subunit protein eL43 (Methanococcus maripaludis (strain DSM 14266 / JCM 13030 / NBRC 101832 / S2 / LL)).